The following is a 154-amino-acid chain: Small ribosomal subunit protein uS15 (154 aa).

Residues 1-23 (MNKKRDKGQSHSTRPARAGPPRW) form a disordered region.

The protein belongs to the universal ribosomal protein uS15 family. Part of the 30S ribosomal subunit.

The sequence is that of Small ribosomal subunit protein uS15 from Staphylothermus marinus (strain ATCC 43588 / DSM 3639 / JCM 9404 / F1).